The following is a 67-amino-acid chain: UPF0337 protein SP_1805 (67 aa).

Residues 1 to 30 (MSVEEKLNQAKGSIKEGVGKAIGDEKMEKE) are disordered.

This sequence belongs to the UPF0337 (CsbD) family.

This is UPF0337 protein SP_1805 from Streptococcus pneumoniae serotype 4 (strain ATCC BAA-334 / TIGR4).